Here is a 433-residue protein sequence, read N- to C-terminus: MIKRLRGLLVMLCCVAGMAVAEEKNILVTSGSDRATPIAVVPFGLQGGSVLPEDIADIIGNDLRNSGYYSPIPRQNMISQPSQASEVIFRDWKALGAQYVMVGSIVPSGGRLQVQYALFNVATEQQVLTGSVAGSTDQLRDMAHYIADQSFEKLTGIKGAFSTRMLYVTAERFSTNNTRYTLQRSDYDGARAVTLLQSREPILSPRFAPDGKRIAYVSFEQKRPRIFVQNIDTGRREQVTNFEGLNGAPAWSPDGSRLAFVLSKDGNPDIYVMNVASRQISRVTAGPGINTEPFWGKDGNTLYFTSDRGGKPQIYKQSVSGGGAERVTFVGNYNANPKLSADEKTLVMIHRQQGFTNFKVAAQDLQRGSVKILSETSLDESPTVAPNGTMLIYATRQQGRGVLMLVSLNGRVRLPLPTAQGEVREPSWSPYLN.

The signal sequence occupies residues 1–21 (MIKRLRGLLVMLCCVAGMAVA).

Belongs to the TolB family. In terms of assembly, the Tol-Pal system is composed of five core proteins: the inner membrane proteins TolA, TolQ and TolR, the periplasmic protein TolB and the outer membrane protein Pal. They form a network linking the inner and outer membranes and the peptidoglycan layer.

It localises to the periplasm. Functionally, part of the Tol-Pal system, which plays a role in outer membrane invagination during cell division and is important for maintaining outer membrane integrity. The polypeptide is Tol-Pal system protein TolB (Pseudomonas putida (strain ATCC 47054 / DSM 6125 / CFBP 8728 / NCIMB 11950 / KT2440)).